A 224-amino-acid chain; its full sequence is 7-cyano-7-deazaguanine synthase (224 aa).

9–19 is a binding site for ATP; it reads ISGGMDSTLCA. Residues cysteine 190, cysteine 198, cysteine 201, and cysteine 204 each coordinate Zn(2+).

Belongs to the QueC family. Zn(2+) serves as cofactor.

The enzyme catalyses 7-carboxy-7-deazaguanine + NH4(+) + ATP = 7-cyano-7-deazaguanine + ADP + phosphate + H2O + H(+). The protein operates within purine metabolism; 7-cyano-7-deazaguanine biosynthesis. In terms of biological role, catalyzes the ATP-dependent conversion of 7-carboxy-7-deazaguanine (CDG) to 7-cyano-7-deazaguanine (preQ(0)). This is 7-cyano-7-deazaguanine synthase from Campylobacter jejuni subsp. jejuni serotype O:6 (strain 81116 / NCTC 11828).